The primary structure comprises 67 residues: Large ribosomal subunit protein uL30 (67 aa).

This sequence belongs to the universal ribosomal protein uL30 family. Part of the 50S ribosomal subunit.

The polypeptide is Large ribosomal subunit protein uL30 (Thermotoga neapolitana (strain ATCC 49049 / DSM 4359 / NBRC 107923 / NS-E)).